Consider the following 138-residue polypeptide: Small ribosomal subunit protein bS6 (138 aa).

The segment at 94 to 138 (VKQDGPLPTPKPTSKENEPEKEEVKPTEEKTESPSKDEKKEDSKE) is disordered. Over residues 106–138 (TSKENEPEKEEVKPTEEKTESPSKDEKKEDSKE) the composition is skewed to basic and acidic residues.

Belongs to the bacterial ribosomal protein bS6 family.

Its function is as follows. Binds together with bS18 to 16S ribosomal RNA. The sequence is that of Small ribosomal subunit protein bS6 from Prochlorococcus marinus (strain NATL2A).